A 486-amino-acid polypeptide reads, in one-letter code: Cobyric acid synthase (486 aa).

One can recognise a GATase cobBQ-type domain in the interval valine 248–alanine 435. The Nucleophile role is filled by cysteine 329. Histidine 427 is an active-site residue.

The protein belongs to the CobB/CobQ family. CobQ subfamily.

It functions in the pathway cofactor biosynthesis; adenosylcobalamin biosynthesis. Its function is as follows. Catalyzes amidations at positions B, D, E, and G on adenosylcobyrinic A,C-diamide. NH(2) groups are provided by glutamine, and one molecule of ATP is hydrogenolyzed for each amidation. The sequence is that of Cobyric acid synthase from Pseudomonas syringae pv. tomato (strain ATCC BAA-871 / DC3000).